Here is a 146-residue protein sequence, read N- to C-terminus: Large ribosomal subunit protein uL15 (146 aa).

Residues 1 to 10 show a composition bias toward basic and acidic residues; it reads MTLKLHDLRP. Residues 1 to 41 form a disordered region; sequence MTLKLHDLRPARGSKIARTRVGRGDGSKGKTAGRGTKGTRA.

The protein belongs to the universal ribosomal protein uL15 family. In terms of assembly, part of the 50S ribosomal subunit.

In terms of biological role, binds to the 23S rRNA. The protein is Large ribosomal subunit protein uL15 of Mycobacterium tuberculosis (strain ATCC 25177 / H37Ra).